Consider the following 44-residue polypeptide: Photosystem I reaction center subunit IX (44 aa).

A helical membrane pass occupies residues 7-27 (YLSVAPVLSTLSLGFFAGFLI).

Belongs to the PsaJ family.

Its subcellular location is the plastid membrane. In terms of biological role, may help in the organization of the PsaE and PsaF subunits. This is Photosystem I reaction center subunit IX from Cuscuta obtusiflora (Peruvian dodder).